The sequence spans 957 residues: Glycine dehydrogenase (decarboxylating) (957 aa).

An N6-(pyridoxal phosphate)lysine modification is found at lysine 708.

Belongs to the GcvP family. As to quaternary structure, the glycine cleavage system is composed of four proteins: P, T, L and H. It depends on pyridoxal 5'-phosphate as a cofactor.

It carries out the reaction N(6)-[(R)-lipoyl]-L-lysyl-[glycine-cleavage complex H protein] + glycine + H(+) = N(6)-[(R)-S(8)-aminomethyldihydrolipoyl]-L-lysyl-[glycine-cleavage complex H protein] + CO2. In terms of biological role, the glycine cleavage system catalyzes the degradation of glycine. The P protein binds the alpha-amino group of glycine through its pyridoxal phosphate cofactor; CO(2) is released and the remaining methylamine moiety is then transferred to the lipoamide cofactor of the H protein. The chain is Glycine dehydrogenase (decarboxylating) from Shigella sonnei (strain Ss046).